We begin with the raw amino-acid sequence, 804 residues long: DNA mismatch repair protein MutS (804 aa).

614–621 (GPNMAGKS) provides a ligand contact to ATP.

It belongs to the DNA mismatch repair MutS family.

This protein is involved in the repair of mismatches in DNA. It is possible that it carries out the mismatch recognition step. This protein has a weak ATPase activity. This Ehrlichia ruminantium (strain Gardel) protein is DNA mismatch repair protein MutS.